The primary structure comprises 1074 residues: DNA double-strand break repair Rad50 ATPase (1074 aa).

ATP contacts are provided by residues arginine 12, 32–38, and glutamine 142; that span reads NGSGKSS. 2 coiled-coil regions span residues 355–402 and 452–506; these read ELEK…REKA and NLVE…KGLG. Residues 512-611 form the Zinc-hook domain; it reads LENLEDFSEL…KITRLKDAKK (100 aa). Residues cysteine 559 and cysteine 562 each coordinate Zn(2+). Coiled coils occupy residues 574 to 611, 649 to 678, 749 to 823, and 865 to 895; these read TAEE…DAKK, LKLE…LQVQ, KEKL…EILE, and TEEK…LKAL. 973–978 serves as a coordination point for ATP; it reads LLSGGE.

It belongs to the SMC family. RAD50 subfamily. In terms of assembly, homodimer. Forms a heterotetramer composed of two Mre11 subunits and two Rad50 subunits. Zn(2+) serves as cofactor.

Its function is as follows. Part of the Rad50/Mre11 complex, which is involved in the early steps of DNA double-strand break (DSB) repair. The complex may facilitate opening of the processed DNA ends to aid in the recruitment of HerA and NurA. Rad50 controls the balance between DNA end bridging and DNA resection via ATP-dependent structural rearrangements of the Rad50/Mre11 complex. In Methanosarcina acetivorans (strain ATCC 35395 / DSM 2834 / JCM 12185 / C2A), this protein is DNA double-strand break repair Rad50 ATPase.